An 831-amino-acid chain; its full sequence is Prolactin receptor (831 aa).

The first 23 residues, 1–23 (MKQNLISSVQIILLLPLTTVGLT), serve as a signal peptide directing secretion. Topologically, residues 24–438 (SQSFPGKPKI…EIPNDFRVKD (415 aa)) are extracellular. Fibronectin type-III domains lie at 30-128 (KPKI…VQPG), 129-232 (SPVN…SPPE), 233-331 (KPTI…VQPD), and 332-433 (PPAN…IPND). C36 and C46 are disulfide-bonded. N-linked (GlcNAc...) asparagine glycosylation is present at N59. C75 and C86 are oxidised to a cystine. 8 N-linked (GlcNAc...) asparagine glycosylation sites follow: N91, N100, N112, N132, N262, N303, N315, and N335. Residues D414 and H416 each coordinate Zn(2+). The short motif at 419–423 (WSEWS) is the WSXWS motif element. A helical transmembrane segment spans residues 439–459 (MIVWIVLGVLSSLICLIMSWT). Topologically, residues 460–831 (MVLKGYRMIT…DPSSFMPSFK (372 aa)) are cytoplasmic. Positions 471 to 479 (ILPPVPGPK) match the Box 1 motif motif. Disordered regions lie at residues 527–563 (HQLM…SPSL) and 776–831 (HTPT…PSFK). Positions 545-554 (TLKETDRDSG) are enriched in basic and acidic residues. The segment covering 777–803 (TPTSQEEPAKETSQNPQQGQVETNMSY) has biased composition (polar residues).

The protein belongs to the type I cytokine receptor family. Type 1 subfamily.

It is found in the membrane. Its function is as follows. This is a receptor for the anterior pituitary hormone prolactin. The chain is Prolactin receptor (PRLR) from Meleagris gallopavo (Wild turkey).